The following is a 326-amino-acid chain: Histone-lysine N-methyltransferase Suv4-20 (326 aa).

The SET domain maps to 163–273 (QECTRYSLEG…AGDEITCFYG (111 aa)). The tract at residues 294 to 313 (RGKFSTSDEEENDEPSALSE) is disordered.

The protein belongs to the class V-like SAM-binding methyltransferase superfamily. Histone-lysine methyltransferase family. Suvar4-20 subfamily.

It localises to the nucleus. The protein localises to the chromosome. The enzyme catalyses N(6)-methyl-L-lysyl(20)-[histone H4] + S-adenosyl-L-methionine = N(6),N(6)-dimethyl-L-lysyl(20)-[histone H4] + S-adenosyl-L-homocysteine + H(+). The catalysed reaction is N(6),N(6)-dimethyl-L-lysyl(20)-[histone H4] + S-adenosyl-L-methionine = N(6),N(6),N(6)-trimethyl-L-lysyl(20)-[histone H4] + S-adenosyl-L-homocysteine + H(+). In terms of biological role, histone methyltransferase that specifically di- and trimethylates 'Lys-20' of histone H4 (H4K20me2/me3). H4 'Lys-20' trimethylation represents a specific tag for epigenetic transcriptional repression. Contributes to dosage compensation of X chromosome-relative to autosome-linked gene expression, possibly by converting H4K20me1 to H4K20m2/me3 on autosomes. Involved in the regulation of growth and body fat metabolism downstream of the TOR complex 2 pathway. The chain is Histone-lysine N-methyltransferase Suv4-20 from Caenorhabditis briggsae.